The following is a 100-amino-acid chain: Urease subunit gamma (100 aa).

It belongs to the urease gamma subunit family. Heterotrimer of UreA (gamma), UreB (beta) and UreC (alpha) subunits. Three heterotrimers associate to form the active enzyme.

The protein resides in the cytoplasm. The catalysed reaction is urea + 2 H2O + H(+) = hydrogencarbonate + 2 NH4(+). It participates in nitrogen metabolism; urea degradation; CO(2) and NH(3) from urea (urease route): step 1/1. This is Urease subunit gamma from Flavobacterium johnsoniae (strain ATCC 17061 / DSM 2064 / JCM 8514 / BCRC 14874 / CCUG 350202 / NBRC 14942 / NCIMB 11054 / UW101) (Cytophaga johnsonae).